The following is a 455-amino-acid chain: MGPDAKKQKLEGVDHLQNGFPVTRFLAWCEKVGLELNPKVYISTEGTVSQYGMLAREDIADGELLFTVPRSAILSQNTTRIQELLEKEQESLQSTSGWVPLLISLLYEATDSSSLWAPYFGLWPELDPPDMPMFWSEEEQTKLLQGTGVLEAIRNDLKNIEEEYNSIVLPFITRNPEKFCPMKHTLDLYKRLVAFVMAYSFQEPLEENDEEDEDEKDILPPMMVPVADLLNHVAHHNAHLEFTPECLRMVTTKSVHAGQELFNTYGEMANWQLLHMYGFAEPHPQNSNETADIQMVTMREAALQAAQTEDDRLEMQKRWDFLCHIEMVGEEGAFVFGLEEVMTEEELKVSLKVLCMSKEEFAEYKENDGWEEDEGDDEQTLMIQEISHLPTPWRKLLHLSAKLTLKNYSTELSMDEALVNNITAYAKLSSREQRSLQVKYGQKRILHQLLELTKS.

The region spanning 38-266 is the SET domain; sequence PKVYISTEGT…AGQELFNTYG (229 aa).

It belongs to the class V-like SAM-binding methyltransferase superfamily. Histone-lysine methyltransferase family. SETD6 subfamily.

It localises to the nucleus. Functionally, protein-lysine N-methyltransferase. The chain is N-lysine methyltransferase setd6 (setd6) from Xenopus laevis (African clawed frog).